Consider the following 110-residue polypeptide: HIT-like protein CPn_0488/CP_0266/CPj0488/CpB0508 (110 aa).

The 108-residue stretch at 3 to 110 folds into the HIT domain; the sequence is VFKQIIDGLI…LGGRPLGAIA (108 aa). The Histidine triad motif signature appears at 95–99; the sequence is HLHIH.

In Chlamydia pneumoniae (Chlamydophila pneumoniae), this protein is HIT-like protein CPn_0488/CP_0266/CPj0488/CpB0508.